The following is a 433-amino-acid chain: Gamma-glutamyl phosphate reductase (433 aa).

This sequence belongs to the gamma-glutamyl phosphate reductase family.

The protein resides in the cytoplasm. It catalyses the reaction L-glutamate 5-semialdehyde + phosphate + NADP(+) = L-glutamyl 5-phosphate + NADPH + H(+). Its pathway is amino-acid biosynthesis; L-proline biosynthesis; L-glutamate 5-semialdehyde from L-glutamate: step 2/2. Functionally, catalyzes the NADPH-dependent reduction of L-glutamate 5-phosphate into L-glutamate 5-semialdehyde and phosphate. The product spontaneously undergoes cyclization to form 1-pyrroline-5-carboxylate. This chain is Gamma-glutamyl phosphate reductase, found in Rhodopseudomonas palustris (strain BisB18).